The chain runs to 1012 residues: DNA polymerase gamma (1012 aa).

Belongs to the DNA polymerase type-A family. Mg(2+) serves as cofactor.

It is found in the mitochondrion. The catalysed reaction is DNA(n) + a 2'-deoxyribonucleoside 5'-triphosphate = DNA(n+1) + diphosphate. Functionally, involved in the replication of mitochondrial DNA. The sequence is that of DNA polymerase gamma (MIP1) from Komagataella pastoris (Yeast).